Consider the following 470-residue polypeptide: MAAALKPSAPEIRKAAQEFINYLNKAVTPFHATQEVKDRLLQAGFTELPESGHWDIQPTSKYFVTKNRSAILAFAVGGSYKPGSGFSIVVGHTDSPCLRVKPISHQKSDKFLQVGVSTYGGGIWRTWFDRDLSVAGLVIVKNGEKLQHKLIDVKKPVLFIPNLAIHLETDRTTFKPNTETELRPILETFAAAGINAPQKPESTGFADPRNITNNHHPQFLGLIAKEAGCQPEDIVDLDLYLYDTNKAAIVGMEDEFISGARLDNQVGTYTAISGLLESLTGESFKNDPQIRIAACFDNEEVGSDSAMGASSSFTEFVLRRLSAGGSTTAFEEAIGKSMLISADQAHATHPNYSAKHEENHRPAFHGGVVVKVNVNQRYATTSTTHAALKQVAFEAQVPLQVVVVRNDSPCGSTVGPILATKLGLQTVDVGCPQLAMHSIREFADTSSIYQATTLYSTFYERLSTVLSNMQ.

Residue His-92 participates in Zn(2+) binding. His-166 lines the substrate pocket. Asp-263 is a binding site for Zn(2+). Glu-299 serves as a coordination point for substrate. Zn(2+)-binding residues include Glu-300 and Asp-343. Substrate is bound by residues Asp-343, His-346, Lys-371, and Tyr-378. His-437 contributes to the Zn(2+) binding site.

Belongs to the peptidase M18 family. In terms of assembly, tetrahedron-shaped homododecamer built from six homodimers. Requires Zn(2+) as cofactor. As to expression, expressed in various cell types and tissues including the pharynx, neurons, body wall muscle, intestine and vulva.

The protein resides in the cytoplasm. It localises to the cytosol. The enzyme catalyses Release of an N-terminal aspartate or glutamate from a peptide, with a preference for aspartate.. Functionally, aminopeptidase with specificity towards an acidic amino acid at the N-terminus. Plays a role in membrane trafficking and is specifically involved in the recycling and degradation of endocytic cargo. The protein is Aspartyl aminopeptidase of Caenorhabditis elegans.